The sequence spans 319 residues: MDRLIRSLLMNQNKQATDKLDHPDTSETVNISSLALLKMLRHARSGIPLEVMGLMLGDFVDDYTINVTDVFAMPQSGTSVTVESVDPVYQTKHMDLLKLVGRTENVVGWYHSHPGFGCWLSSVDVNTQQSFEALHPRAVAVVVDPIQSVKGKVMLDAFRSVNPLNLQIRPLAPTAEPRQTTSNLGHLTKPSLISVVHGLGTKYYSLNVAYRMGSNEQKMLMCLNKKSWYDQLNMSTYSELEKKQEEKFKSINKLIAVFNKDIDEVKEKPIADKKGKTQEEVKKFGKINAKQQLQMITSSLLNDSLCHQLTAMINAKSMT.

The MPN domain occupies 29 to 164 (VNISSLALLK…LDAFRSVNPL (136 aa)). Positions 111, 113, and 124 each coordinate Zn(2+). The JAMM motif motif lies at 111-124 (HSHPGFGCWLSSVD).

The protein belongs to the peptidase M67A family.

This is an uncharacterized protein from Caenorhabditis elegans.